Here is a 397-residue protein sequence, read N- to C-terminus: Serine/threonine-protein kinase 17A (397 aa).

Residues 1–23 are disordered; that stretch reads MIPLEKPGSGGSPSAAASGSGPG. Ser-9 carries the post-translational modification Phosphoserine. A Protein kinase domain is found at 44 to 304; sequence LSPGRELGRG…AEECLKHPWL (261 aa). ATP-binding positions include 50-58 and Lys-73; that span reads LGRGKFAVV. Asp-169 functions as the Proton acceptor in the catalytic mechanism.

It belongs to the protein kinase superfamily. CAMK Ser/Thr protein kinase family. DAP kinase subfamily. In terms of processing, autophosphorylated. Highly expressed in bone marrow. Lower levels in brain, heart, lung, liver and kidney.

Its subcellular location is the nucleus. The catalysed reaction is L-seryl-[protein] + ATP = O-phospho-L-seryl-[protein] + ADP + H(+). The enzyme catalyses L-threonyl-[protein] + ATP = O-phospho-L-threonyl-[protein] + ADP + H(+). Inhibited by thiazolidinedione-type compounds: inhibited by furan- and pyridone- thiazolidinediones. Its function is as follows. Acts as a positive regulator of apoptosis. May also act as a regulator of cellular reactive oxygen species. The chain is Serine/threonine-protein kinase 17A (STK17A) from Oryctolagus cuniculus (Rabbit).